Consider the following 424-residue polypeptide: 3-ketoacyl-CoA thiolase, peroxisomal (424 aa).

The N-terminal 26 residues, 1–26, are a transit peptide targeting the peroxisome; the sequence is MQRLQVVLGHLRGPADSGWMPQAAPC. The interval 1-26 is PTS2-type peroxisomal targeting signal; it reads MQRLQVVLGHLRGPADSGWMPQAAPC. Residues threonine 59 and threonine 60 each carry the phosphothreonine modification. The Acyl-thioester intermediate role is filled by cysteine 123. Active-site proton acceptor residues include histidine 377 and cysteine 408.

Belongs to the thiolase-like superfamily. Thiolase family. In terms of assembly, homodimer. Interacts (via PTS2-type peroxisomal targeting signal region) with PEX7; leading to its translocation into peroxisomes.

It localises to the peroxisome. The catalysed reaction is an acyl-CoA + acetyl-CoA = a 3-oxoacyl-CoA + CoA. It catalyses the reaction 2 acetyl-CoA = acetoacetyl-CoA + CoA. It carries out the reaction tetradecanoyl-CoA + acetyl-CoA = 3-oxohexadecanoyl-CoA + CoA. The enzyme catalyses hexanoyl-CoA + acetyl-CoA = 3-oxooctanoyl-CoA + CoA. The catalysed reaction is 3-oxohexadecanedioyl-CoA + CoA = tetradecanedioyl-CoA + acetyl-CoA. It catalyses the reaction 3-oxo-(6Z,9Z,12Z,15Z,18Z,21Z)-tetracosahexaenoyl-CoA + CoA = (4Z,7Z,10Z,13Z,16Z,19Z)-docosahexaenoyl-CoA + acetyl-CoA. It functions in the pathway lipid metabolism; peroxisomal fatty acid beta-oxidation. Responsible for the thiolytic cleavage of straight chain 3-keto fatty acyl-CoAs (3-oxoacyl-CoAs). Plays an important role in fatty acid peroxisomal beta-oxidation. Catalyzes the cleavage of short, medium, long, and very long straight chain 3-oxoacyl-CoAs. This chain is 3-ketoacyl-CoA thiolase, peroxisomal, found in Homo sapiens (Human).